The primary structure comprises 536 residues: Membrane protein insertase YidC (536 aa).

Residues 5–25 (ALIAVILSIVFFYGYSALFPP) form a helical membrane-spanning segment. Positions 30–54 (APAPSAQQAVTGSQPGAPQASVAAV) are disordered. Residues 31–54 (PAPSAQQAVTGSQPGAPQASVAAV) show a composition bias toward low complexity. Helical transmembrane passes span 350 to 370 (YGIA…PLTH), 420 to 440 (LPML…MFSI), 454 to 474 (LAGK…MVIQ), and 494 to 514 (PVVF…YWLV).

It belongs to the OXA1/ALB3/YidC family. Type 1 subfamily. As to quaternary structure, interacts with the Sec translocase complex via SecD. Specifically interacts with transmembrane segments of nascent integral membrane proteins during membrane integration.

It localises to the cell inner membrane. In terms of biological role, required for the insertion and/or proper folding and/or complex formation of integral membrane proteins into the membrane. Involved in integration of membrane proteins that insert both dependently and independently of the Sec translocase complex, as well as at least some lipoproteins. Aids folding of multispanning membrane proteins. This is Membrane protein insertase YidC from Geobacter metallireducens (strain ATCC 53774 / DSM 7210 / GS-15).